Here is a 270-residue protein sequence, read N- to C-terminus: Undecaprenyl-diphosphatase (270 aa).

Helical transmembrane passes span 3-23 (TIVT…LPVS), 42-62 (WAMF…VQYW), 86-106 (LLAA…YIDV), 108-128 (LGSP…ILVI), 184-204 (AEFS…LELL), 217-237 (VGWS…LAVI), and 249-269 (FKPF…WLAM).

Belongs to the UppP family.

Its subcellular location is the cell inner membrane. The catalysed reaction is di-trans,octa-cis-undecaprenyl diphosphate + H2O = di-trans,octa-cis-undecaprenyl phosphate + phosphate + H(+). Catalyzes the dephosphorylation of undecaprenyl diphosphate (UPP). Confers resistance to bacitracin. In Novosphingobium aromaticivorans (strain ATCC 700278 / DSM 12444 / CCUG 56034 / CIP 105152 / NBRC 16084 / F199), this protein is Undecaprenyl-diphosphatase.